Here is a 407-residue protein sequence, read N- to C-terminus: Na(+)-translocating NADH-quinone reductase subunit F (407 aa).

A helical transmembrane segment spans residues 3 to 23; sequence IILGVVMFTLIVLALVLVILF. The 95-residue stretch at 32–126 folds into the 2Fe-2S ferredoxin-type domain; it reads GDITISINGD…DMDIELPEEI (95 aa). Residues cysteine 69, cysteine 75, cysteine 78, and cysteine 110 each contribute to the [2Fe-2S] cluster site. In terms of domain architecture, FAD-binding FR-type spans 129–269; it reads VKKWECTVIS…SGPFGEFFAK (141 aa). A catalytic region spans residues 272 to 389; the sequence is DAEMVFIGGG…PMMNAAVIGM (118 aa).

It belongs to the NqrF family. In terms of assembly, composed of six subunits; NqrA, NqrB, NqrC, NqrD, NqrE and NqrF. Requires [2Fe-2S] cluster as cofactor. FAD serves as cofactor.

It is found in the cell inner membrane. The enzyme catalyses a ubiquinone + n Na(+)(in) + NADH + H(+) = a ubiquinol + n Na(+)(out) + NAD(+). Functionally, NQR complex catalyzes the reduction of ubiquinone-1 to ubiquinol by two successive reactions, coupled with the transport of Na(+) ions from the cytoplasm to the periplasm. The first step is catalyzed by NqrF, which accepts electrons from NADH and reduces ubiquinone-1 to ubisemiquinone by a one-electron transfer pathway. The sequence is that of Na(+)-translocating NADH-quinone reductase subunit F from Vibrio anguillarum (Listonella anguillarum).